Here is a 700-residue protein sequence, read N- to C-terminus: Interleukin-1 receptor accessory protein-like 1-B (700 aa).

The first 18 residues, 1–18 (MRSRVPLQILLYAAVIRS), serve as a signal peptide directing secretion. At 19–357 (LKVVSKRGSV…QLSRRELMYT (339 aa)) the chain is on the extracellular side. In terms of domain architecture, Ig-like C2-type 1 spans 32–134 (TDWSVDYLRY…YCMKVSMALT (103 aa)). C53 and C118 are joined by a disulfide. Residues N63, N122, N138, N213, N264, and N331 are each glycosylated (N-linked (GlcNAc...) asparagine). 2 consecutive Ig-like C2-type domains span residues 143 to 232 (CYNS…TELT) and 242 to 350 (PKIL…IQLS). C164 and C216 form a disulfide bridge. Residues C267 and C334 are joined by a disulfide bond. Residues 358–378 (VELAGGLGAILLMLIFLVSLY) traverse the membrane as a helical segment. Topologically, residues 379–700 (KCYRIELMLF…RETSISSVIW (322 aa)) are cytoplasmic. One can recognise a TIR domain in the interval 403–559 (KDYDAYVSYT…RFWKQLQYEM (157 aa)). Residue E491 is part of the active site. The interval 564–700 (PEPKLSHEQV…RETSISSVIW (137 aa)) is required for synaptic vesicle accumulation during synaptogenesis.

The protein belongs to the interleukin-1 receptor family.

Its subcellular location is the cell membrane. It is found in the cytoplasm. It catalyses the reaction NAD(+) + H2O = ADP-D-ribose + nicotinamide + H(+). May regulate secretion and presynaptic differentiation through inhibition of the activity of N-type voltage-gated calcium channel. During presynaptic differentiation may regulate both synaptic vesicle accumulation in axon terminals and subsequent axon terminal remodeling. This is Interleukin-1 receptor accessory protein-like 1-B (il1rapl1b) from Danio rerio (Zebrafish).